The following is a 103-amino-acid chain: Small ribosomal subunit protein uS10 (103 aa).

It belongs to the universal ribosomal protein uS10 family. As to quaternary structure, part of the 30S ribosomal subunit.

Functionally, involved in the binding of tRNA to the ribosomes. In Jannaschia sp. (strain CCS1), this protein is Small ribosomal subunit protein uS10.